A 60-amino-acid polypeptide reads, in one-letter code: Large ribosomal subunit protein bL32 (60 aa).

Over residues 1 to 20 the composition is skewed to basic residues; sequence MAVQKSRKSRSRRDMRRSHH. A disordered region spans residues 1–22; sequence MAVQKSRKSRSRRDMRRSHHRM.

Belongs to the bacterial ribosomal protein bL32 family.

In Psychrobacter arcticus (strain DSM 17307 / VKM B-2377 / 273-4), this protein is Large ribosomal subunit protein bL32.